Consider the following 390-residue polypeptide: 8-amino-7-oxononanoate synthase (390 aa).

Arginine 20 contributes to the substrate binding site. Glycine 107–phenylalanine 108 is a pyridoxal 5'-phosphate binding site. Residue histidine 132 participates in substrate binding. Pyridoxal 5'-phosphate is bound by residues serine 179, aspartate 204–histidine 207, and threonine 235–lysine 238. At lysine 238 the chain carries N6-(pyridoxal phosphate)lysine. Threonine 352 contributes to the substrate binding site.

Belongs to the class-II pyridoxal-phosphate-dependent aminotransferase family. BioF subfamily. In terms of assembly, homodimer. Requires pyridoxal 5'-phosphate as cofactor.

It carries out the reaction 6-carboxyhexanoyl-[ACP] + L-alanine + H(+) = (8S)-8-amino-7-oxononanoate + holo-[ACP] + CO2. It functions in the pathway cofactor biosynthesis; biotin biosynthesis. Its function is as follows. Catalyzes the decarboxylative condensation of pimeloyl-[acyl-carrier protein] and L-alanine to produce 8-amino-7-oxononanoate (AON), [acyl-carrier protein], and carbon dioxide. The sequence is that of 8-amino-7-oxononanoate synthase from Exiguobacterium sibiricum (strain DSM 17290 / CCUG 55495 / CIP 109462 / JCM 13490 / 255-15).